A 134-amino-acid chain; its full sequence is MEEDFSSQMKKMALAMGTSLSDKDIELLPTDMRHHGSFNYLKFFKHIRKLHASGQLDDAIHTAFQSLDKDKSGFIEWNEIKYILSIIPSSGPTTPLTDEEAEAMIQAADTHGDGRINYEEFSELIKKEKIPKKK.

EF-hand domains lie at 55–90 (QLDD…IPSS) and 96–131 (LTDE…EKIP). The Ca(2+) site is built by Asp-68, Asp-70, Ser-72, Phe-74, Glu-76, Glu-79, Asp-109, Asp-113, and Glu-120.

Belongs to the parvalbumin family.

The chain is Parvalbumin-like EF-hand-containing protein from Homo sapiens (Human).